A 219-amino-acid chain; its full sequence is Ras-related protein Rab-3 (219 aa).

GTP is bound by residues 29-37 (GNSSVGKTS), 48-54 (TSAFVST), 77-81 (DTAGQ), 135-138 (NKCD), and 165-167 (SAK). Residues 51 to 59 (FVSTVGIDF) carry the Effector region motif. A disordered region spans residues 191 to 219 (LDKDPQQQPKGQKLEANPTQKPAQQQCNC). Residues 207–219 (NPTQKPAQQQCNC) are compositionally biased toward polar residues. Residues cysteine 217 and cysteine 219 are each lipidated (S-geranylgeranyl cysteine). Residue cysteine 219 is modified to Cysteine methyl ester.

This sequence belongs to the small GTPase superfamily. Rab family.

It is found in the cell membrane. Its function is as follows. Involved in exocytosis by regulating a late step in synaptic vesicle fusion. Could play a role in neurotransmitter release by regulating membrane flow in the nerve terminal. Plays a role in the recruitment of endophilin unc-57 to synaptic vesicles. Probably by controlling dense-core vesicle trafficking, plays a role in the AVG neuron-mediated formation of the right axon tract of the ventral nerve cord. This is Ras-related protein Rab-3 (rab-3) from Caenorhabditis elegans.